The chain runs to 801 residues: Mitochondrial intermediate peptidase (801 aa).

The N-terminal 41 residues, 1–41, are a transit peptide targeting the mitochondrion; sequence MKDQLLVPLRRRPWTCQKCLQRLQLPRHQTRRSFETAASPF. His564 is a Zn(2+) binding site. Glu565 is an active-site residue. 2 residues coordinate Zn(2+): His568 and His571.

The protein belongs to the peptidase M3 family. It depends on Zn(2+) as a cofactor.

It is found in the mitochondrion matrix. It catalyses the reaction Release of an N-terminal octapeptide as second stage of processing of some proteins imported into the mitochondrion.. In terms of biological role, cleaves proteins, imported into the mitochondrion, to their mature size. While most mitochondrial precursor proteins are processed to the mature form in one step by mitochondrial processing peptidase (MPP), the sequential cleavage by MIP of an octapeptide after initial processing by MPP is a required step for a subgroup of nuclear-encoded precursor proteins destined for the matrix or the inner membrane. This is Mitochondrial intermediate peptidase (oct1) from Aspergillus fumigatus (strain ATCC MYA-4609 / CBS 101355 / FGSC A1100 / Af293) (Neosartorya fumigata).